A 327-amino-acid polypeptide reads, in one-letter code: Autoinducer 2 import system permease protein LsrD (327 aa).

Helical transmembrane passes span 3 to 23 (LNWE…FGAI), 41 to 61 (ICIG…GIDI), 63 to 83 (LGST…FGLP), 86 to 106 (LAVP…AALI), 114 to 134 (LVIT…LSGL), 158 to 178 (VLGL…FWLI), 211 to 231 (ALYG…VSYF), 257 to 277 (IYGG…VGYL), and 283 to 303 (MVGI…VVVV).

It belongs to the binding-protein-dependent transport system permease family. AraH/RbsC subfamily. As to quaternary structure, the complex is composed of two ATP-binding proteins (LsrA), two transmembrane proteins (LsrC and LsrD) and a solute-binding protein (LsrB).

It localises to the cell inner membrane. Part of the ABC transporter complex LsrABCD involved in autoinducer 2 (AI-2) import. Probably responsible for the translocation of the substrate across the membrane. The chain is Autoinducer 2 import system permease protein LsrD (lsrD) from Enterobacter sp. (strain 638).